The sequence spans 480 residues: Cysteine--tRNA ligase (480 aa).

Residue cysteine 29 coordinates Zn(2+). Positions 31 to 41 (PTVYSDPHLGH) match the 'HIGH' region motif. Positions 220, 245, and 249 each coordinate Zn(2+). Positions 276 to 280 (KMAKS) match the 'KMSKS' region motif. Position 279 (lysine 279) interacts with ATP.

Belongs to the class-I aminoacyl-tRNA synthetase family. Monomer. It depends on Zn(2+) as a cofactor.

The protein localises to the cytoplasm. The enzyme catalyses tRNA(Cys) + L-cysteine + ATP = L-cysteinyl-tRNA(Cys) + AMP + diphosphate. This chain is Cysteine--tRNA ligase, found in Thermus thermophilus (strain ATCC BAA-163 / DSM 7039 / HB27).